The primary structure comprises 301 residues: D-alanine--D-alanine ligase A (301 aa).

The 195-residue stretch at 96–290 folds into the ATP-grasp domain; sequence KKILRYEGVE…YSKLLDMIIE (195 aa). 123–178 serves as a coordination point for ATP; the sequence is LDKLGFPLVVKPNSGGSSVGVKIVYNKNELISMLETVFEWDSEVVIEKYIKGDEIT. Mg(2+) contacts are provided by aspartate 245, glutamate 257, and asparagine 259.

This sequence belongs to the D-alanine--D-alanine ligase family. Mg(2+) is required as a cofactor. Requires Mn(2+) as cofactor.

Its subcellular location is the cytoplasm. It catalyses the reaction 2 D-alanine + ATP = D-alanyl-D-alanine + ADP + phosphate + H(+). It functions in the pathway cell wall biogenesis; peptidoglycan biosynthesis. Its function is as follows. Cell wall formation. The polypeptide is D-alanine--D-alanine ligase A (Bacillus cereus (strain ATCC 14579 / DSM 31 / CCUG 7414 / JCM 2152 / NBRC 15305 / NCIMB 9373 / NCTC 2599 / NRRL B-3711)).